The following is a 238-amino-acid chain: Ribonuclease PH (238 aa).

Residues R86 and 124–126 each bind phosphate; that span reads GTR.

This sequence belongs to the RNase PH family. In terms of assembly, homohexameric ring arranged as a trimer of dimers.

The catalysed reaction is tRNA(n+1) + phosphate = tRNA(n) + a ribonucleoside 5'-diphosphate. Phosphorolytic 3'-5' exoribonuclease that plays an important role in tRNA 3'-end maturation. Removes nucleotide residues following the 3'-CCA terminus of tRNAs; can also add nucleotides to the ends of RNA molecules by using nucleoside diphosphates as substrates, but this may not be physiologically important. Probably plays a role in initiation of 16S rRNA degradation (leading to ribosome degradation) during starvation. This chain is Ribonuclease PH, found in Actinobacillus pleuropneumoniae serotype 5b (strain L20).